Reading from the N-terminus, the 126-residue chain is Thioredoxin domain-containing protein, mitochondrial (126 aa).

Positions 14 to 120 (SQKIATNTSF…ILEFLNHIET (107 aa)) constitute a Thioredoxin domain.

Belongs to the thioredoxin family.

The protein resides in the mitochondrion. The sequence is that of Thioredoxin domain-containing protein, mitochondrial from Dictyostelium discoideum (Social amoeba).